The following is a 143-amino-acid chain: Ribosomal RNA large subunit methyltransferase H (143 aa).

S-adenosyl-L-methionine-binding positions include Gly95 and 111-116 (FSDLTF).

The protein belongs to the RNA methyltransferase RlmH family. In terms of assembly, homodimer.

The protein localises to the cytoplasm. The enzyme catalyses pseudouridine(1915) in 23S rRNA + S-adenosyl-L-methionine = N(3)-methylpseudouridine(1915) in 23S rRNA + S-adenosyl-L-homocysteine + H(+). Specifically methylates the pseudouridine at position 1915 (m3Psi1915) in 23S rRNA. This Metamycoplasma arthritidis (strain 158L3-1) (Mycoplasma arthritidis) protein is Ribosomal RNA large subunit methyltransferase H.